A 370-amino-acid chain; its full sequence is Glutamate 5-kinase (370 aa).

Lysine 17 serves as a coordination point for ATP. Substrate contacts are provided by serine 56, aspartate 143, and asparagine 155. An ATP-binding site is contributed by 175-176; it reads SD. The PUA domain occupies 280–357; it reads RGTIRVDAGA…AEIVAILGYS (78 aa).

The protein belongs to the glutamate 5-kinase family.

The protein localises to the cytoplasm. The enzyme catalyses L-glutamate + ATP = L-glutamyl 5-phosphate + ADP. It functions in the pathway amino-acid biosynthesis; L-proline biosynthesis; L-glutamate 5-semialdehyde from L-glutamate: step 1/2. Functionally, catalyzes the transfer of a phosphate group to glutamate to form L-glutamate 5-phosphate. The chain is Glutamate 5-kinase from Cereibacter sphaeroides (strain ATCC 17023 / DSM 158 / JCM 6121 / CCUG 31486 / LMG 2827 / NBRC 12203 / NCIMB 8253 / ATH 2.4.1.) (Rhodobacter sphaeroides).